The sequence spans 667 residues: MIASCLYYLLLPAARLFRFLSDAFFTCRKNALLAKSSSPQVEGNFAMAPRGPDQEECEGLLQQWREEGWNQTPSTASEGPLADKGLAESSLALLMDNSGEQDAASEDKWSSRQLSDLRAAENLNQPFPEVLGEEPLAEVEGPLWAAVPVQTGPQYADCAVLPMGAMAAEQWEEDPAMVAWSIAPEPMPQEETSMWPFEGLEQLQPPPMEIPYHEILWREWEDFSTQPDAQGLEAGDGPQFQFTLMSYNILAQDLMQQSSELYLHCHPDILNWNYRFANLMQEFQHWDPDILCLQEVQEDHYWEQLEPSLRMMGFTCFYKRRTGCKTDGCAVCYKPTRFRLLCASPVEYFRPGLELLNRDNVGLVLLLQPLVPEGLGQVSVAPLCVANTHVLYNPRRGDVKLAQMAILLAEVDKVARLSDGSHCPIILCGDLNSVPDSPLYNFIRDGELQYNGMPAWKVSGQEDFSHQLYQRKLQAPLWPSSLGITDCCQYVTSCHPKRSERLKYGRDFLLRFRFCDLACQRPVGLVLMEGVTDTKPDRPAGWAECIFEEEISELEPVFPRTIGTIQHCLHLTSVYTHFLPQHGCPEVTTMPLGLGMTVDYIFFSAESCENENRTDHRLDRDGTLKLLGRLSLLSEEILWAANGLPNPFYSSDHLCLLASFGMEVTAP.

Residues Ser-77 and Ser-105 each carry the phosphoserine modification.

It belongs to the CCR4/nocturin family.

The protein is Protein angel homolog 1 of Mus musculus (Mouse).